Here is an 829-residue protein sequence, read N- to C-terminus: Leucine--tRNA ligase (829 aa).

A 'HIGH' region motif is present at residues 42-52 (PYPSGNLHMGH). The 'KMSKS' region signature appears at 582 to 586 (KMSKS). Lysine 585 lines the ATP pocket.

It belongs to the class-I aminoacyl-tRNA synthetase family.

The protein resides in the cytoplasm. The catalysed reaction is tRNA(Leu) + L-leucine + ATP = L-leucyl-tRNA(Leu) + AMP + diphosphate. This is Leucine--tRNA ligase from Moorella thermoacetica (strain ATCC 39073 / JCM 9320).